The sequence spans 232 residues: Large ribosomal subunit protein uL1 (232 aa).

Belongs to the universal ribosomal protein uL1 family. Part of the 50S ribosomal subunit.

Binds directly to 23S rRNA. The L1 stalk is quite mobile in the ribosome, and is involved in E site tRNA release. In terms of biological role, protein L1 is also a translational repressor protein, it controls the translation of the L11 operon by binding to its mRNA. The chain is Large ribosomal subunit protein uL1 from Rhizobium meliloti (strain 1021) (Ensifer meliloti).